We begin with the raw amino-acid sequence, 103 residues long: Small ribosomal subunit protein uS10 (103 aa).

It belongs to the universal ribosomal protein uS10 family. As to quaternary structure, part of the 30S ribosomal subunit.

Its function is as follows. Involved in the binding of tRNA to the ribosomes. The sequence is that of Small ribosomal subunit protein uS10 from Acetivibrio thermocellus (strain ATCC 27405 / DSM 1237 / JCM 9322 / NBRC 103400 / NCIMB 10682 / NRRL B-4536 / VPI 7372) (Clostridium thermocellum).